We begin with the raw amino-acid sequence, 328 residues long: Glycerol-3-phosphate dehydrogenase [NAD(P)+] (328 aa).

NADPH is bound by residues W11, R30, and K103. Residues K103, G132, and S134 each coordinate sn-glycerol 3-phosphate. Residue A136 coordinates NADPH. Sn-glycerol 3-phosphate is bound by residues K187, D240, S250, R251, and N252. Residue K187 is the Proton acceptor of the active site. R251 contributes to the NADPH binding site. NADPH is bound by residues V275 and E277.

Belongs to the NAD-dependent glycerol-3-phosphate dehydrogenase family.

It localises to the cytoplasm. It carries out the reaction sn-glycerol 3-phosphate + NAD(+) = dihydroxyacetone phosphate + NADH + H(+). The enzyme catalyses sn-glycerol 3-phosphate + NADP(+) = dihydroxyacetone phosphate + NADPH + H(+). It functions in the pathway membrane lipid metabolism; glycerophospholipid metabolism. In terms of biological role, catalyzes the reduction of the glycolytic intermediate dihydroxyacetone phosphate (DHAP) to sn-glycerol 3-phosphate (G3P), the key precursor for phospholipid synthesis. This Thiobacillus denitrificans (strain ATCC 25259 / T1) protein is Glycerol-3-phosphate dehydrogenase [NAD(P)+].